The sequence spans 1251 residues: MSTERDSETTFDEESQPNDEVVPYSDDETEDELEDQGSTVEPEQNRVNREAEKKRETFRKDCTWQVKANDRKFHEQPHFMNTKFFCIKESKYASNAIKTYKYNGFTFLPMNLFEQFKRAANFYFLILLILQAIPQISTLAWYTTLVPLLLVLGITAIKDLVDDVARHKMDKEINNRTCEVIKDGRFKIIKWKDIQVGDVIRLKKNDFIPADILLLSSSEPNSLCYVETAELDGETNLKFKMALEITDQYLQIEDNLATFDGFIECEEPNNRLDKFTGTLFWKNQSFPLDADKILLRGCVIRNTDVCHGLVIFAGADTKIMKNSGKTRFKRTKIDYLMNYMVYTIFIVLILVSAGLAIGHAYWEAQVGNYSWYLYDGENATPSYRGFLNFWGYIIVLNTMVPISLYVSVEVIRLGQSHFINWDLQMYYAEKDTPAKARTTTLNEQLGQIHYIFSDKTGTLTQNIMTFKKCCINGTIYGDHRDASQHSHSKIELVDFSWNTFADGKLAFYDHYLIEQIQSGKEPEVRQFFFLLSICHTVMVDRIDGQINYQAASPDEGALVNAARNFGFAFLARTQNTITVSELGSERTYNVLAILDFNSDRKRMSIIVRTPEGSIRLYCKGADTVIYERLHRMNPTKQETQDALDIFASETLRTLCLCYKEIEEKEFTEWNNKFMAASVASSNRDEALDKVYEEIEKDLILLGATAIEDKLQDGVPETISKLAKADIKIWVLTGDKKETAENIGFACELLTEDTTICYGEDINSLLHTRMENQRNRGGVSAKFAPPVYEPFFPPGENRALIITGSWLNEILLEKKTKRSKILKLKFPRTEEERRMRSQSRRRLEEKKEQRQKNFVDLACECSAVICCRVTPKQKAMVVDLVKRYKKAITLAIGDGANDVNMIKTAHIGVGISGQEGMQAVMSSDYSFAQFRYLQRLLLVHGRWSYIRMCKFLRYFFYKNFAFTLVHFWYSFFNGYSAQTAYEDWFITLYNVLYSSLPVLLMGLLDQDVSDKLSLRFPGLYVVGQRDLLFNYKRFFVSLLHGVLTSMVLFFIPLGAYLQTVGQDGEAPSDYQSFAVTVASALVITVNFQIGLDTSYWTFVNAFSIFGSIALYFGIMFDFHSAGIHVLFPSAFQFTGTASNALRQPYIWLTIILTVAVCLLPVVAIRFLSMTIWPSESDKIQKHRKRLKAEEQWKRRQSVFRRGVSSRRSAYAFSHQRGYADLISSGRSIRKKRSPLDAIIADGTAEYRRTVES.

Positions 1 to 52 (MSTERDSETTFDEESQPNDEVVPYSDDETEDELEDQGSTVEPEQNRVNREAE) are disordered. Over 1–121 (MSTERDSETT…LFEQFKRAAN (121 aa)) the chain is Cytoplasmic. The span at 25–35 (SDDETEDELED) shows a compositional bias: acidic residues. Residues 43-52 (EQNRVNREAE) are compositionally biased toward basic and acidic residues. Residues 122 to 142 (FYFLILLILQAIPQISTLAWY) form a helical membrane-spanning segment. Residues 143–144 (TT) lie on the Exoplasmic loop side of the membrane. A helical membrane pass occupies residues 145–165 (LVPLLLVLGITAIKDLVDDVA). At 166–339 (RHKMDKEINN…RTKIDYLMNY (174 aa)) the chain is on the cytoplasmic side. Residues 340 to 360 (MVYTIFIVLILVSAGLAIGHA) form a helical membrane-spanning segment. Residues 361-385 (YWEAQVGNYSWYLYDGENATPSYRG) are Exoplasmic loop-facing. Residues 386-406 (FLNFWGYIIVLNTMVPISLYV) form a helical membrane-spanning segment. Residues 407–952 (SVEVIRLGQS…SYIRMCKFLR (546 aa)) lie on the Cytoplasmic side of the membrane. The 4-aspartylphosphate intermediate role is filled by aspartate 454. Residues aspartate 454, lysine 455, threonine 456, glutamate 555, phenylalanine 596, lysine 619, arginine 652, threonine 732, glycine 733, aspartate 734, arginine 867, and lysine 873 each coordinate ATP. A Mg(2+)-binding site is contributed by aspartate 454. Residue threonine 456 participates in Mg(2+) binding. Aspartate 893 is a Mg(2+) binding site. Residues asparagine 896 and aspartate 897 each coordinate ATP. Mg(2+) is bound at residue aspartate 897. A helical membrane pass occupies residues 953–973 (YFFYKNFAFTLVHFWYSFFNG). Residues 974-982 (YSAQTAYED) lie on the Exoplasmic loop side of the membrane. The helical transmembrane segment at 983 to 1003 (WFITLYNVLYSSLPVLLMGLL) threads the bilayer. Topologically, residues 1004-1032 (DQDVSDKLSLRFPGLYVVGQRDLLFNYKR) are cytoplasmic. Residues 1033–1053 (FFVSLLHGVLTSMVLFFIPLG) form a helical membrane-spanning segment. Topologically, residues 1054–1071 (AYLQTVGQDGEAPSDYQS) are exoplasmic loop. A helical transmembrane segment spans residues 1072 to 1092 (FAVTVASALVITVNFQIGLDT). Over 1093 to 1094 (SY) the chain is Cytoplasmic. Residues 1095–1115 (WTFVNAFSIFGSIALYFGIMF) form a helical membrane-spanning segment. The Exoplasmic loop portion of the chain corresponds to 1116 to 1142 (DFHSAGIHVLFPSAFQFTGTASNALRQ). Residues 1143–1163 (PYIWLTIILTVAVCLLPVVAI) traverse the membrane as a helical segment. Over 1164–1251 (RFLSMTIWPS…TAEYRRTVES (88 aa)) the chain is Cytoplasmic. A Phosphoserine modification is found at serine 1223.

This sequence belongs to the cation transport ATPase (P-type) (TC 3.A.3) family. Type IV subfamily. In terms of assembly, component of a P4-ATPase flippase complex which consists of a catalytic alpha subunit ATP8B1 and an accessory beta subunit TMEM30A. The flippase ATP8B1:TMEM30A complex can form an intermediate phosphoenzyme in vitro. Also interacts with beta subunit TMEM30B. Mg(2+) is required as a cofactor. In terms of tissue distribution, hepatocytes, bile duct, intestinal epithelial cells (cholangiocytes and ileocytes), and pancreatic acinar cells.

It is found in the cell membrane. It localises to the apical cell membrane. The protein resides in the cell projection. The protein localises to the stereocilium. Its subcellular location is the endoplasmic reticulum. It is found in the golgi apparatus. The catalysed reaction is ATP + H2O + phospholipidSide 1 = ADP + phosphate + phospholipidSide 2.. It carries out the reaction a 1,2-diacyl-sn-glycero-3-phosphocholine(out) + ATP + H2O = a 1,2-diacyl-sn-glycero-3-phosphocholine(in) + ADP + phosphate + H(+). It catalyses the reaction a 1,2-diacyl-sn-glycero-3-phospho-L-serine(out) + ATP + H2O = a 1,2-diacyl-sn-glycero-3-phospho-L-serine(in) + ADP + phosphate + H(+). Functionally, catalytic component of a P4-ATPase flippase complex which catalyzes the hydrolysis of ATP coupled to the transport of phospholipids, in particular phosphatidylcholines (PC), from the outer to the inner leaflet of the plasma membrane. May participate in the establishment of the canalicular membrane integrity by ensuring asymmetric distribution of phospholipids in the canicular membrane. Thus may have a role in the regulation of bile acids transport into the canaliculus, uptake of bile acids from intestinal contents into intestinal mucosa or both and protect hepatocytes from bile salts. Involved in the microvillus formation in polarized epithelial cells; the function seems to be independent from its flippase activity. Participates in correct apical membrane localization of CDC42, CFTR and SLC10A2. Enables CDC42 clustering at the apical membrane during enterocyte polarization through the interaction between CDC42 polybasic region and negatively charged membrane lipids provided by ATP8B1. Together with TMEM30A is involved in uptake of the synthetic drug alkylphospholipid perifosine. Required for the preservation of cochlear hair cells in the inner ear. According PubMed:20852622 is proposed to act as cardiolipin transporter during inflammatory injury; the function is questioned by PubMed:21475228. This Mus musculus (Mouse) protein is Phospholipid-transporting ATPase IC.